A 223-amino-acid chain; its full sequence is MDVKIIWHGHACFSIEGKKNVLIDPFLTGNPMAKVKAEDLNPDIILVTHGHYDHAADAVSISKRTGAPVLSVFELSEIFKESGINTIDINPGGTVEFEGVSIKATIATHSSSYDGRYAGNPVGYVIDIGRKIYHAGDTGYFKDMELIGSVDRPEISLLPIGGHYTMDVDGAVEALKMLKSPIAIPMHYNTFDVIKADPLRFKNLAAAVGTYVIVPKVEEPVEL.

The protein belongs to the UPF0173 family.

This chain is UPF0173 metal-dependent hydrolase TV0864, found in Thermoplasma volcanium (strain ATCC 51530 / DSM 4299 / JCM 9571 / NBRC 15438 / GSS1).